Reading from the N-terminus, the 330-residue chain is AA9 family lytic polysaccharide monooxygenase E (330 aa).

Positions 1-20 (MRSTLVTGLIAGLLSQQAAA) are cleaved as a signal peptide. Cu(2+) contacts are provided by His-21 and His-99. Residues Cys-58 and Cys-193 are joined by a disulfide bond. 2 residues coordinate O2: His-179 and Gln-188. Cu(2+) is bound at residue Tyr-190. Residues 293 to 330 (CSVAKYQQCGGTGYTGCTSCASGSTCSAVSPPYYSQCV) enclose the CBM1 domain.

The protein belongs to the polysaccharide monooxygenase AA9 family. Cu(2+) is required as a cofactor.

The protein resides in the secreted. It carries out the reaction [(1-&gt;4)-beta-D-glucosyl]n+m + reduced acceptor + O2 = 4-dehydro-beta-D-glucosyl-[(1-&gt;4)-beta-D-glucosyl]n-1 + [(1-&gt;4)-beta-D-glucosyl]m + acceptor + H2O.. Its function is as follows. Lytic polysaccharide monooxygenase (LPMO) that depolymerizes crystalline and amorphous polysaccharides via the oxidation of scissile alpha- or beta-(1-4)-glycosidic bonds, yielding exclusively C1 oxidation products. Catalysis by LPMOs requires the reduction of the active-site copper from Cu(II) to Cu(I) by a reducing agent and H(2)O(2) or O(2) as a cosubstrate. In Neurospora crassa (strain ATCC 24698 / 74-OR23-1A / CBS 708.71 / DSM 1257 / FGSC 987), this protein is AA9 family lytic polysaccharide monooxygenase E (gh61-5).